The chain runs to 181 residues: Small ribosomal subunit protein uS4 (181 aa).

One can recognise an S4 RNA-binding domain in the interval 108–172 (RRLQTQVYRR…SPLVSDIHSE (65 aa)).

This sequence belongs to the universal ribosomal protein uS4 family. In terms of assembly, part of the 30S ribosomal subunit. Contacts protein S5. The interaction surface between S4 and S5 is involved in control of translational fidelity.

Functionally, one of the primary rRNA binding proteins, it binds directly to 16S rRNA where it nucleates assembly of the body of the 30S subunit. Its function is as follows. With S5 and S12 plays an important role in translational accuracy. The chain is Small ribosomal subunit protein uS4 from Methanospirillum hungatei JF-1 (strain ATCC 27890 / DSM 864 / NBRC 100397 / JF-1).